Here is a 355-residue protein sequence, read N- to C-terminus: Holliday junction branch migration complex subunit RuvB (355 aa).

The segment at 4–195 (TDKLTGADRL…FGIVARLEFY (192 aa)) is large ATPase domain (RuvB-L). Residues Leu34, Arg35, Gly76, Lys79, Thr80, Thr81, 142–144 (EDY), Arg185, Tyr195, and Arg232 contribute to the ATP site. Thr80 contributes to the Mg(2+) binding site. The segment at 196–266 (TPDELARIVA…LADAALEMLD (71 aa)) is small ATPAse domain (RuvB-S). The interval 269 to 355 (SVGFDLMDRK…DGGADLAEGL (87 aa)) is head domain (RuvB-H). 3 residues coordinate DNA: Arg305, Arg324, and Arg329.

Belongs to the RuvB family. In terms of assembly, homohexamer. Forms an RuvA(8)-RuvB(12)-Holliday junction (HJ) complex. HJ DNA is sandwiched between 2 RuvA tetramers; dsDNA enters through RuvA and exits via RuvB. An RuvB hexamer assembles on each DNA strand where it exits the tetramer. Each RuvB hexamer is contacted by two RuvA subunits (via domain III) on 2 adjacent RuvB subunits; this complex drives branch migration. In the full resolvosome a probable DNA-RuvA(4)-RuvB(12)-RuvC(2) complex forms which resolves the HJ.

The protein localises to the cytoplasm. The enzyme catalyses ATP + H2O = ADP + phosphate + H(+). In terms of biological role, the RuvA-RuvB-RuvC complex processes Holliday junction (HJ) DNA during genetic recombination and DNA repair, while the RuvA-RuvB complex plays an important role in the rescue of blocked DNA replication forks via replication fork reversal (RFR). RuvA specifically binds to HJ cruciform DNA, conferring on it an open structure. The RuvB hexamer acts as an ATP-dependent pump, pulling dsDNA into and through the RuvAB complex. RuvB forms 2 homohexamers on either side of HJ DNA bound by 1 or 2 RuvA tetramers; 4 subunits per hexamer contact DNA at a time. Coordinated motions by a converter formed by DNA-disengaged RuvB subunits stimulates ATP hydrolysis and nucleotide exchange. Immobilization of the converter enables RuvB to convert the ATP-contained energy into a lever motion, pulling 2 nucleotides of DNA out of the RuvA tetramer per ATP hydrolyzed, thus driving DNA branch migration. The RuvB motors rotate together with the DNA substrate, which together with the progressing nucleotide cycle form the mechanistic basis for DNA recombination by continuous HJ branch migration. Branch migration allows RuvC to scan DNA until it finds its consensus sequence, where it cleaves and resolves cruciform DNA. This chain is Holliday junction branch migration complex subunit RuvB, found in Cupriavidus metallidurans (strain ATCC 43123 / DSM 2839 / NBRC 102507 / CH34) (Ralstonia metallidurans).